The chain runs to 339 residues: Biotin synthase (339 aa).

In terms of domain architecture, Radical SAM core spans 53–271 (NAIQMSRLLS…IALARILMPR (219 aa)). [4Fe-4S] cluster-binding residues include C68, C72, and C75. [2Fe-2S] cluster contacts are provided by C112, C143, C203, and R275.

Belongs to the radical SAM superfamily. Biotin synthase family. Homodimer. [4Fe-4S] cluster is required as a cofactor. [2Fe-2S] cluster serves as cofactor.

The catalysed reaction is (4R,5S)-dethiobiotin + (sulfur carrier)-SH + 2 reduced [2Fe-2S]-[ferredoxin] + 2 S-adenosyl-L-methionine = (sulfur carrier)-H + biotin + 2 5'-deoxyadenosine + 2 L-methionine + 2 oxidized [2Fe-2S]-[ferredoxin]. The protein operates within cofactor biosynthesis; biotin biosynthesis; biotin from 7,8-diaminononanoate: step 2/2. Functionally, catalyzes the conversion of dethiobiotin (DTB) to biotin by the insertion of a sulfur atom into dethiobiotin via a radical-based mechanism. The protein is Biotin synthase of Agrobacterium fabrum (strain C58 / ATCC 33970) (Agrobacterium tumefaciens (strain C58)).